A 203-amino-acid polypeptide reads, in one-letter code: Small ribosomal subunit protein uS4 (203 aa).

Positions 1-46 (MSKRQSAKYKLDRRMGENIWGRPKSPVNRREYGPGQHGQRRKGKMS) are disordered. Residues 94–157 (RRLDAVVYRA…QEMALVAEAQ (64 aa)) form the S4 RNA-binding domain.

Belongs to the universal ribosomal protein uS4 family. Part of the 30S ribosomal subunit. Contacts protein S5. The interaction surface between S4 and S5 is involved in control of translational fidelity.

Its function is as follows. One of the primary rRNA binding proteins, it binds directly to 16S rRNA where it nucleates assembly of the body of the 30S subunit. Functionally, with S5 and S12 plays an important role in translational accuracy. The chain is Small ribosomal subunit protein uS4 from Sphingopyxis alaskensis (strain DSM 13593 / LMG 18877 / RB2256) (Sphingomonas alaskensis).